We begin with the raw amino-acid sequence, 199 residues long: Small ribosomal subunit protein uS4 (199 aa).

The S4 RNA-binding domain maps to 91-153 (ARLDNVVYRM…SKNFVVIKEA (63 aa)).

Belongs to the universal ribosomal protein uS4 family. As to quaternary structure, part of the 30S ribosomal subunit. Contacts protein S5. The interaction surface between S4 and S5 is involved in control of translational fidelity.

One of the primary rRNA binding proteins, it binds directly to 16S rRNA where it nucleates assembly of the body of the 30S subunit. In terms of biological role, with S5 and S12 plays an important role in translational accuracy. This Exiguobacterium sibiricum (strain DSM 17290 / CCUG 55495 / CIP 109462 / JCM 13490 / 255-15) protein is Small ribosomal subunit protein uS4.